The chain runs to 102 residues: Small ribosomal subunit protein bS18 (102 aa).

It belongs to the bacterial ribosomal protein bS18 family. As to quaternary structure, part of the 30S ribosomal subunit. Forms a tight heterodimer with protein bS6.

In terms of biological role, binds as a heterodimer with protein bS6 to the central domain of the 16S rRNA, where it helps stabilize the platform of the 30S subunit. This is Small ribosomal subunit protein bS18 from Orientia tsutsugamushi (strain Ikeda) (Rickettsia tsutsugamushi).